A 1936-amino-acid chain; its full sequence is Potassium channel K1 (1936 aa).

6 helical membrane-spanning segments follow: residues 175 to 195, 598 to 618, 643 to 663, 670 to 690, 701 to 721, and 734 to 754; these read IIILYIIMLEFGSMLISYILL, VWIIAILIRIILWCIVWLWAA, GYIECTFQWCGVLDYLFGLYF, YIFSFFSLIDFITTPVSSFIM, TYWFLILGPLRFLRLVRAEST, and IIIIGIIILSLAILFTFSGIM. An intramembrane region (pore-forming) is located at residues 772 to 788; sequence FVYFGVITMSTVGYGDY. A helical membrane pass occupies residues 791-811; it reads VTPAGKCLTMFIIVTCFTFVG. Residues 1141–1185 are a coiled coil; that stretch reads DTSSMINYKSKSRVNYKMVKGTKNEFIRNQNYNINSIYYANNDNM.

The protein localises to the membrane. It catalyses the reaction K(+)(in) = K(+)(out). With respect to regulation, partially inhibited by Ba(2+) and quinine. Probably insensitive to tetraethylammonium (TEA). Likely a predominant potassium channel in the erythrocytic stages of parasites. Mediates transmembrane potassium transport. Required for the development of oocysts in the mosquito midgut. In Plasmodium berghei (strain Anka), this protein is Potassium channel K1.